A 216-amino-acid polypeptide reads, in one-letter code: Large ribosomal subunit protein uL1B (216 aa).

The residue at position 11 (Ser-11) is a Phosphoserine.

This sequence belongs to the universal ribosomal protein uL1 family. In terms of assembly, component of the large ribosomal subunit (LSU). Mature yeast ribosomes consist of a small (40S) and a large (60S) subunit. The 40S small subunit contains 1 molecule of ribosomal RNA (18S rRNA) and at least 33 different proteins. The large 60S subunit contains 3 rRNA molecules (25S, 5.8S and 5S rRNA) and at least 46 different proteins. uL1 forms part of the L1 stalk.

Its subcellular location is the cytoplasm. Its function is as follows. Component of the ribosome, a large ribonucleoprotein complex responsible for the synthesis of proteins in the cell. The small ribosomal subunit (SSU) binds messenger RNAs (mRNAs) and translates the encoded message by selecting cognate aminoacyl-transfer RNA (tRNA) molecules. The large subunit (LSU) contains the ribosomal catalytic site termed the peptidyl transferase center (PTC), which catalyzes the formation of peptide bonds, thereby polymerizing the amino acids delivered by tRNAs into a polypeptide chain. The nascent polypeptides leave the ribosome through a tunnel in the LSU and interact with protein factors that function in enzymatic processing, targeting, and the membrane insertion of nascent chains at the exit of the ribosomal tunnel. uL1 forms part of the L1 stalk, a mobile element that plays a role in evacuating the exit-site tRNA. The polypeptide is Large ribosomal subunit protein uL1B (rpl101) (Schizosaccharomyces pombe (strain 972 / ATCC 24843) (Fission yeast)).